Consider the following 341-residue polypeptide: tRNA N6-adenosine threonylcarbamoyltransferase (341 aa).

Histidine 115 and histidine 119 together coordinate Fe cation. Substrate-binding positions include 137–141 (IVSGG), aspartate 170, glycine 183, aspartate 187, and asparagine 276. Position 304 (aspartate 304) interacts with Fe cation.

The protein belongs to the KAE1 / TsaD family. Fe(2+) serves as cofactor.

It is found in the cytoplasm. It carries out the reaction L-threonylcarbamoyladenylate + adenosine(37) in tRNA = N(6)-L-threonylcarbamoyladenosine(37) in tRNA + AMP + H(+). In terms of biological role, required for the formation of a threonylcarbamoyl group on adenosine at position 37 (t(6)A37) in tRNAs that read codons beginning with adenine. Is involved in the transfer of the threonylcarbamoyl moiety of threonylcarbamoyl-AMP (TC-AMP) to the N6 group of A37, together with TsaE and TsaB. TsaD likely plays a direct catalytic role in this reaction. The sequence is that of tRNA N6-adenosine threonylcarbamoyltransferase from Staphylococcus aureus (strain JH1).